The primary structure comprises 106 residues: Insulin-like peptide 04 (106 aa).

A signal peptide spans 1–22 (MPRTFLVVLIYILAGFLCSTSA). The propeptide occupies 23–37 (LRKVNEASGIKTDGS). 3 disulfide bridges follow: C45/C50, C46/C80, and C59/C68. Positions 86–106 (RRKRSLTVDKREAKKFIRQRR) are cleaved as a propeptide — c peptide.

Belongs to the insulin family.

Its subcellular location is the secreted. Insulin decreases blood glucose concentration. May have evolved to activate insulin receptors (INSR) in vertebrates. Molecular docking studies reveals unique interaction with the human insulin receptor. In vivo, insulin-like peptide injection reduces blood glucose levels in two models of zebrafish diabetes (streptozotocin- and glucose-induced). Also shorter swimming distance of zebrafish larvae, an effect which is not observed with human insulin. The polypeptide is Insulin-like peptide 04 (Exaiptasia diaphana (Tropical sea anemone)).